We begin with the raw amino-acid sequence, 287 residues long: Phosphoribosylaminoimidazole-succinocarboxamide synthase (287 aa).

The protein belongs to the SAICAR synthetase family.

It catalyses the reaction 5-amino-1-(5-phospho-D-ribosyl)imidazole-4-carboxylate + L-aspartate + ATP = (2S)-2-[5-amino-1-(5-phospho-beta-D-ribosyl)imidazole-4-carboxamido]succinate + ADP + phosphate + 2 H(+). The protein operates within purine metabolism; IMP biosynthesis via de novo pathway; 5-amino-1-(5-phospho-D-ribosyl)imidazole-4-carboxamide from 5-amino-1-(5-phospho-D-ribosyl)imidazole-4-carboxylate: step 1/2. The sequence is that of Phosphoribosylaminoimidazole-succinocarboxamide synthase from Neisseria meningitidis serogroup C (strain 053442).